Reading from the N-terminus, the 189-residue chain is Protein GrpE (189 aa).

Polar residues predominate over residues 1–13 (MSENKQPEQNQDL). The interval 1 to 35 (MSENKQPEQNQDLTGEPSPEELEAAQAADEFDAMN) is disordered.

The protein belongs to the GrpE family. In terms of assembly, homodimer.

It localises to the cytoplasm. Its function is as follows. Participates actively in the response to hyperosmotic and heat shock by preventing the aggregation of stress-denatured proteins, in association with DnaK and GrpE. It is the nucleotide exchange factor for DnaK and may function as a thermosensor. Unfolded proteins bind initially to DnaJ; upon interaction with the DnaJ-bound protein, DnaK hydrolyzes its bound ATP, resulting in the formation of a stable complex. GrpE releases ADP from DnaK; ATP binding to DnaK triggers the release of the substrate protein, thus completing the reaction cycle. Several rounds of ATP-dependent interactions between DnaJ, DnaK and GrpE are required for fully efficient folding. This is Protein GrpE from Polaromonas naphthalenivorans (strain CJ2).